The sequence spans 220 residues: Elongation factor Ts, chloroplastic (220 aa).

The protein belongs to the EF-Ts family.

The protein resides in the plastid. It localises to the chloroplast. Its function is as follows. Associates with the EF-Tu.GDP complex and induces the exchange of GDP to GTP. It remains bound to the aminoacyl-tRNA.EF-Tu.GTP complex up to the GTP hydrolysis stage on the ribosome. The polypeptide is Elongation factor Ts, chloroplastic (tsf) (Porphyra purpurea (Red seaweed)).